A 71-amino-acid chain; its full sequence is DNA-directed RNA polymerase subunit epsilon (71 aa).

This sequence belongs to the RNA polymerase subunit epsilon family. As to quaternary structure, RNAP is composed of a core of 2 alpha, a beta and a beta' subunit. The core is associated with a delta subunit, and at least one of epsilon or omega. When a sigma factor is associated with the core the holoenzyme is formed, which can initiate transcription.

It carries out the reaction RNA(n) + a ribonucleoside 5'-triphosphate = RNA(n+1) + diphosphate. In terms of biological role, a non-essential component of RNA polymerase (RNAP). This chain is DNA-directed RNA polymerase subunit epsilon, found in Staphylococcus carnosus (strain TM300).